A 102-amino-acid polypeptide reads, in one-letter code: Small ribosomal subunit protein uS10 (102 aa).

This sequence belongs to the universal ribosomal protein uS10 family. In terms of assembly, part of the 30S ribosomal subunit.

Its function is as follows. Involved in the binding of tRNA to the ribosomes. This Kineococcus radiotolerans (strain ATCC BAA-149 / DSM 14245 / SRS30216) protein is Small ribosomal subunit protein uS10.